The sequence spans 415 residues: Phosphoribosylamine--glycine ligase (415 aa).

Positions 108 to 311 constitute an ATP-grasp domain; that stretch reads KKIMEKYNIP…LMQHIIDLDE (204 aa). Residue 134–191 participates in ATP binding; the sequence is IENCEFPVVVKKDGLAAGKGVIIADTIEAARSAIEIMYGDEEEGTVVFETFLEGEEFS. Mg(2+) is bound by residues Glu-281 and Asn-283.

The protein belongs to the GARS family. It depends on Mg(2+) as a cofactor. Requires Mn(2+) as cofactor.

It carries out the reaction 5-phospho-beta-D-ribosylamine + glycine + ATP = N(1)-(5-phospho-beta-D-ribosyl)glycinamide + ADP + phosphate + H(+). Its pathway is purine metabolism; IMP biosynthesis via de novo pathway; N(1)-(5-phospho-D-ribosyl)glycinamide from 5-phospho-alpha-D-ribose 1-diphosphate: step 2/2. This Staphylococcus aureus (strain MRSA252) protein is Phosphoribosylamine--glycine ligase.